A 257-amino-acid polypeptide reads, in one-letter code: Protein YIPF5 (257 aa).

The Cytoplasmic portion of the chain corresponds to 1–124 (MSGFDNFNTD…KASDGSIMNE (124 aa)). The chain crosses the membrane as a helical span at residues 125-145 (TDLAGPMVFCLAFGATLLLTG). A topological domain (lumenal) is located at residue lysine 146. Residues 147–167 (IQFGYVYGISAIGCLGMYCLL) form a helical membrane-spanning segment. The Cytoplasmic portion of the chain corresponds to 168-173 (NLMSMT). A helical transmembrane segment spans residues 174 to 194 (GVSFGCVASVLGYCLLPMIIL). The Lumenal portion of the chain corresponds to 195 to 196 (SS). Residues 197-217 (FGVIFSLQGIMGIILTAAIIG) traverse the membrane as a helical segment. Residues 218–236 (WCSLSASKIFISALAMDGQ) lie on the Cytoplasmic side of the membrane. A helical transmembrane segment spans residues 237–257 (QLLVAYPCALLYGVFALISVF).

It belongs to the YIP1 family.

It is found in the endoplasmic reticulum membrane. The protein resides in the golgi apparatus. The protein localises to the cis-Golgi network membrane. Functionally, plays a role in transport between endoplasmic reticulum and Golgi. In Danio rerio (Zebrafish), this protein is Protein YIPF5 (yipf5).